Consider the following 141-residue polypeptide: SLSTKDKETVKAFWSKVSGKSEDIGNDALSRMLVVYPQTKTYFSHWKELTPGSAPVRKHGMTVMKGVGDAVSKIEDLTAGLMELSELHAFTLRVDPANFKISHNILVVFAIMFPKEFTAEVHVSMDKFLAALARALSEKYR.

Ser-1 is modified (N-acetylserine). The 141-residue stretch at 1–141 (SLSTKDKETV…LARALSEKYR (141 aa)) folds into the Globin domain. His-59 provides a ligand contact to O2. Residue His-88 participates in heme b binding.

This sequence belongs to the globin family. In terms of assembly, hb2 is a heterotetramer of two alpha-2 chains and two beta chains. In terms of tissue distribution, red blood cells.

In terms of biological role, involved in oxygen transport from gills to the various peripheral tissues. The protein is Hemoglobin subunit alpha-2 (hba2) of Notothenia angustata (Rockcod).